The sequence spans 355 residues: Uroporphyrinogen decarboxylase (355 aa).

Substrate-binding positions include 27-31 (RQAGR), Asp77, Tyr154, Thr209, and His328.

Belongs to the uroporphyrinogen decarboxylase family. Homodimer.

Its subcellular location is the cytoplasm. The enzyme catalyses uroporphyrinogen III + 4 H(+) = coproporphyrinogen III + 4 CO2. It functions in the pathway porphyrin-containing compound metabolism; protoporphyrin-IX biosynthesis; coproporphyrinogen-III from 5-aminolevulinate: step 4/4. Catalyzes the decarboxylation of four acetate groups of uroporphyrinogen-III to yield coproporphyrinogen-III. This chain is Uroporphyrinogen decarboxylase, found in Vibrio campbellii (strain ATCC BAA-1116).